The following is an 81-amino-acid chain: ATP synthase subunit c (81 aa).

A run of 2 helical transmembrane segments spans residues 7 to 27 (AASV…PGIG) and 57 to 77 (LAFM…LLFA).

Belongs to the ATPase C chain family. F-type ATPases have 2 components, F(1) - the catalytic core - and F(0) - the membrane proton channel. F(1) has five subunits: alpha(3), beta(3), gamma(1), delta(1), epsilon(1). F(0) has four main subunits: a(1), b(1), b'(1) and c(10-14). The alpha and beta chains form an alternating ring which encloses part of the gamma chain. F(1) is attached to F(0) by a central stalk formed by the gamma and epsilon chains, while a peripheral stalk is formed by the delta, b and b' chains.

Its subcellular location is the cellular thylakoid membrane. In terms of biological role, f(1)F(0) ATP synthase produces ATP from ADP in the presence of a proton or sodium gradient. F-type ATPases consist of two structural domains, F(1) containing the extramembraneous catalytic core and F(0) containing the membrane proton channel, linked together by a central stalk and a peripheral stalk. During catalysis, ATP synthesis in the catalytic domain of F(1) is coupled via a rotary mechanism of the central stalk subunits to proton translocation. Its function is as follows. Key component of the F(0) channel; it plays a direct role in translocation across the membrane. A homomeric c-ring of between 10-14 subunits forms the central stalk rotor element with the F(1) delta and epsilon subunits. The chain is ATP synthase subunit c from Synechococcus sp. (strain CC9902).